Consider the following 137-residue polypeptide: Large ribosomal subunit protein uL16c (137 aa).

Residues 1–21 (MLSPKKTKYRKQHRGRMKGKA) form a disordered region.

This sequence belongs to the universal ribosomal protein uL16 family. Part of the 50S ribosomal subunit.

The protein resides in the plastid. It is found in the chloroplast. This is Large ribosomal subunit protein uL16c from Oedogonium cardiacum (Filamentous green alga).